The primary structure comprises 238 residues: Probable RNA/DNA demethylase ALKBH6 (238 aa).

The 132-residue stretch at 96 to 227 (PANHVLVNQY…RVSLTIRRVP (132 aa)) folds into the Fe2OG dioxygenase domain. Residues asparagine 103 and tyrosine 105 each coordinate 2-oxoglutarate. Residues histidine 114, aspartate 116, and histidine 182 each coordinate Fe cation. 2-oxoglutarate is bound by residues arginine 218 and serine 220.

It belongs to the alkB family. Interacts with VCPKMT. Fe(2+) serves as cofactor.

It localises to the cytoplasm. It is found in the nucleus. In terms of biological role, probable Fe(2+)/2-oxoglutarate-dependent dioxygenase involved in oxidative demethylation of nucleic acids. Binds nucleic acids with a preference for ssDNA or ssRNA to other types of DNAs. May play a role in nucleic acid damage repair. This Mus musculus (Mouse) protein is Probable RNA/DNA demethylase ALKBH6 (Alkbh6).